The primary structure comprises 147 residues: Protein disulfide isomerase-like 5-1 (147 aa).

Positions 1-29 (MDLAPGRRARLLVALALVVLVALAARSGA) are cleaved as a signal peptide. A Thioredoxin domain is found at 30–137 (EVITLTEETF…LKNFVSDEAE (108 aa)). Residues Cys-59 and Cys-62 each act as nucleophile in the active site. Cys-59 and Cys-62 are joined by a disulfide.

It belongs to the protein disulfide isomerase family.

Functionally, acts as a protein-folding catalyst that interacts with nascent polypeptides to catalyze the formation, isomerization, and reduction or oxidation of disulfide bonds. May play a role in storage protein biogenesis. The protein is Protein disulfide isomerase-like 5-1 (PDIL5-1) of Oryza sativa subsp. japonica (Rice).